A 131-amino-acid chain; its full sequence is Global transcriptional regulator Spx 2 (131 aa).

A disulfide bridge links Cys10 with Cys13.

Belongs to the ArsC family. Spx subfamily. In terms of assembly, interacts with the C-terminal domain of the alpha subunit of the RNAP.

It is found in the cytoplasm. Global transcriptional regulator that plays a key role in stress response and exerts either positive or negative regulation of genes. Acts by interacting with the C-terminal domain of the alpha subunit of the RNA polymerase (RNAP). This interaction can enhance binding of RNAP to the promoter region of target genes and stimulate their transcription, or block interaction of RNAP with activator. The polypeptide is Global transcriptional regulator Spx 2 (Bacillus cereus (strain ATCC 14579 / DSM 31 / CCUG 7414 / JCM 2152 / NBRC 15305 / NCIMB 9373 / NCTC 2599 / NRRL B-3711)).